Reading from the N-terminus, the 306-residue chain is Polyisoprenyl-teichoic acid--peptidoglycan teichoic acid transferase TagU (306 aa).

At 1–11 (MRNERRKKKKT) the chain is on the cytoplasmic side. Residues 12–32 (LLLTILTIIGLLVLGTGGYAY) traverse the membrane as a helical; Signal-anchor for type II membrane protein segment. Residues 33–306 (YLWHKAASTV…TKELKESLEK (274 aa)) are Extracellular-facing.

The protein belongs to the LytR/CpsA/Psr (LCP) family. In terms of assembly, interacts with MreB. Interacts with FloT.

Its subcellular location is the cell membrane. It localises to the membrane raft. The protein operates within cell wall biogenesis. May catalyze the final step in cell wall teichoic acid biosynthesis, the transfer of the anionic cell wall polymers (APs) from their lipid-linked precursor to the cell wall peptidoglycan (PG). The sequence is that of Polyisoprenyl-teichoic acid--peptidoglycan teichoic acid transferase TagU from Bacillus subtilis (strain 168).